We begin with the raw amino-acid sequence, 320 residues long: Cytochrome f (320 aa).

A signal peptide spans 1–35 (MQTRNTLSWIKEEITRSISVSLMIYIITWASISNA). Tyrosine 36, cysteine 56, cysteine 59, and histidine 60 together coordinate heme. Residues 286–306 (VQGLLFFLASVVLAQIFLVLK) form a helical membrane-spanning segment.

This sequence belongs to the cytochrome f family. As to quaternary structure, the 4 large subunits of the cytochrome b6-f complex are cytochrome b6, subunit IV (17 kDa polypeptide, petD), cytochrome f and the Rieske protein, while the 4 small subunits are PetG, PetL, PetM and PetN. The complex functions as a dimer. It depends on heme as a cofactor.

The protein localises to the plastid. It is found in the chloroplast thylakoid membrane. Its function is as follows. Component of the cytochrome b6-f complex, which mediates electron transfer between photosystem II (PSII) and photosystem I (PSI), cyclic electron flow around PSI, and state transitions. In Carica papaya (Papaya), this protein is Cytochrome f.